A 255-amino-acid chain; its full sequence is H-2 class II histocompatibility antigen, E-D alpha chain (255 aa).

An N-terminal signal peptide occupies residues 1–25 (MATIGALVLRFFFIAVLMSSQKSWA). An alpha-1 region spans residues 26 to 109 (IKEEHTIIQA…ERSNNTPDAN (84 aa)). The Extracellular segment spans residues 26–216 (IKEEHTIIQA…EKTLLPETKE (191 aa)). The alpha-2 stretch occupies residues 110–203 (VAPEVTVLSR…GLEEPLRKTW (94 aa)). The Ig-like C1-type domain maps to 112-204 (PEVTVLSRSP…LEEPLRKTWE (93 aa)). Cys-132 and Cys-188 form a disulfide bridge. An N-linked (GlcNAc...) asparagine glycan is attached at Asn-143. Residues 204–216 (EFEEKTLLPETKE) form a connecting peptide region. Residues 217-242 (NVMCALGLFVGLVGIVVGIILIMKGI) traverse the membrane as a helical segment. Over 243–255 (KKRNVVERRQGAL) the chain is Cytoplasmic.

It belongs to the MHC class II family.

It localises to the membrane. The sequence is that of H-2 class II histocompatibility antigen, E-D alpha chain (H2-Ea) from Mus musculus (Mouse).